The primary structure comprises 383 residues: N-acetyldiaminopimelate deacetylase (383 aa).

Residue Asp72 is part of the active site. The active-site Proton acceptor is Glu131.

This sequence belongs to the peptidase M20A family. N-acetyldiaminopimelate deacetylase subfamily.

The enzyme catalyses N-acetyl-(2S,6S)-2,6-diaminopimelate + H2O = (2S,6S)-2,6-diaminopimelate + acetate. It participates in amino-acid biosynthesis; L-lysine biosynthesis via DAP pathway; LL-2,6-diaminopimelate from (S)-tetrahydrodipicolinate (acetylase route): step 3/3. In terms of biological role, catalyzes the conversion of N-acetyl-diaminopimelate to diaminopimelate and acetate. The sequence is that of N-acetyldiaminopimelate deacetylase from Lacticaseibacillus casei (strain BL23) (Lactobacillus casei).